A 618-amino-acid chain; its full sequence is Protein fem-1 homolog C (618 aa).

ANK repeat units follow at residues 2–31 (DLKTAVFNAARDGKLKLLQKLLENKSDREV), 40–70 (NGATPLLMASRYGHLELVEFLMECCCAPVEL), 82–111 (EGAPPLWAASAAGHLKVVQSLLGHGASVNN), 115–144 (TNSTPLRAACFDGHLDIVRYLVEHQADLEV), 148–177 (HGHTCLMISCYKGHREIAQFLLEKGADVNR), 181–210 (KGNTALHDCAESGSLEIMKMLLKFGASMEK), and 213–243 (YGMTPLLSASVTGHTNIVDFLTAHPQTGLAE). TPR repeat units lie at residues 245–279 (ISALELLGATFVDKKRDLLGALQYWKRAMELRHSE) and 337–370 (SYYIRYRGAVYADSGNFERCIRLWKYALDMQQSN). ANK repeat units follow at residues 482-524 (NGFS…DVNS) and 528-557 (DDNSPLHVAASNNHPDIMKLLISGGTHFDS).

Belongs to the fem-1 family. As to quaternary structure, component of a CRL2 E3 ubiquitin-protein ligase complex, also named ECS (Elongin BC-CUL2/5-SOCS-box protein) complex.

It functions in the pathway protein modification; protein ubiquitination. In terms of biological role, substrate-recognition component of a Cul2-RING (CRL2) E3 ubiquitin-protein ligase complex of the DesCEND (destruction via C-end degrons) pathway, which recognizes a C-degron located at the extreme C terminus of target proteins, leading to their ubiquitination and degradation. The C-degron recognized by the DesCEND pathway is usually a motif of less than ten residues and can be present in full-length proteins, truncated proteins or proteolytically cleaved forms. The CRL2(FEM1C) complex specifically recognizes proteins with an arginine at the C-terminus: recognizes and binds proteins ending with -Lys/Arg-Xaa-Arg and -Lys/Arg-Xaa-Xaa-Arg C-degrons, leading to their ubiquitination and degradation. The polypeptide is Protein fem-1 homolog C (Danio rerio (Zebrafish)).